A 240-amino-acid chain; its full sequence is Eukaryotic translation initiation factor 3 subunit J (240 aa).

Residues 19–95 (KADVNKWAGE…FANMTPEQQL (77 aa)) are disordered. Residues 28-45 (EDEDDVKDNWEDDDEEEE) show a composition bias toward acidic residues. The span at 46 to 56 (KKDAPKQEDTP) shows a compositional bias: basic and acidic residues. The span at 60–71 (AKPKKAAQQKKL) shows a compositional bias: basic residues. Coiled-coil stretches lie at residues 63–90 (KKAA…ANMT) and 176–235 (SNNI…DYDD). The segment covering 72 to 81 (KKEDLERLQR) has biased composition (basic and acidic residues).

This sequence belongs to the eIF-3 subunit J family. As to quaternary structure, component of the eukaryotic translation initiation factor 3 (eIF-3) complex.

The protein resides in the cytoplasm. In terms of biological role, component of the eukaryotic translation initiation factor 3 (eIF-3) complex, which is involved in protein synthesis of a specialized repertoire of mRNAs and, together with other initiation factors, stimulates binding of mRNA and methionyl-tRNAi to the 40S ribosome. The eIF-3 complex specifically targets and initiates translation of a subset of mRNAs involved in cell proliferation. The polypeptide is Eukaryotic translation initiation factor 3 subunit J (Anopheles gambiae (African malaria mosquito)).